The chain runs to 381 residues: tRNA N6-adenosine threonylcarbamoyltransferase (381 aa).

The Fe cation site is built by histidine 114 and histidine 118. Substrate contacts are provided by residues 142-146 (VVSGG), aspartate 178, glycine 191, aspartate 195, and asparagine 321. Fe cation is bound at residue aspartate 349.

It belongs to the KAE1 / TsaD family. Requires Fe(2+) as cofactor.

Its subcellular location is the cytoplasm. It catalyses the reaction L-threonylcarbamoyladenylate + adenosine(37) in tRNA = N(6)-L-threonylcarbamoyladenosine(37) in tRNA + AMP + H(+). Required for the formation of a threonylcarbamoyl group on adenosine at position 37 (t(6)A37) in tRNAs that read codons beginning with adenine. Is involved in the transfer of the threonylcarbamoyl moiety of threonylcarbamoyl-AMP (TC-AMP) to the N6 group of A37, together with TsaE and TsaB. TsaD likely plays a direct catalytic role in this reaction. This Koribacter versatilis (strain Ellin345) protein is tRNA N6-adenosine threonylcarbamoyltransferase.